The sequence spans 360 residues: NAD(P)H-quinone oxidoreductase subunit 1, chloroplastic (360 aa).

8 helical membrane-spanning segments follow: residues 27–47 (VWIF…VLVI), 98–118 (FSIG…VIPF), 129–149 (IGIF…LMSG), 165–185 (AAQS…ISLL), 203–223 (FWGW…ISSL), 253–273 (FGLF…FVTI), 297–317 (VFGT…VLVI), and 340–360 (FLLP…LLSL).

Belongs to the complex I subunit 1 family. In terms of assembly, NDH is composed of at least 16 different subunits, 5 of which are encoded in the nucleus.

The protein resides in the plastid. It is found in the chloroplast thylakoid membrane. The catalysed reaction is a plastoquinone + NADH + (n+1) H(+)(in) = a plastoquinol + NAD(+) + n H(+)(out). It carries out the reaction a plastoquinone + NADPH + (n+1) H(+)(in) = a plastoquinol + NADP(+) + n H(+)(out). Functionally, NDH shuttles electrons from NAD(P)H:plastoquinone, via FMN and iron-sulfur (Fe-S) centers, to quinones in the photosynthetic chain and possibly in a chloroplast respiratory chain. The immediate electron acceptor for the enzyme in this species is believed to be plastoquinone. Couples the redox reaction to proton translocation, and thus conserves the redox energy in a proton gradient. This chain is NAD(P)H-quinone oxidoreductase subunit 1, chloroplastic, found in Draba nemorosa (Woodland whitlowgrass).